Consider the following 157-residue polypeptide: Peptide methionine sulfoxide reductase MsrA (157 aa).

C10 is an active-site residue.

This sequence belongs to the MsrA Met sulfoxide reductase family.

It catalyses the reaction L-methionyl-[protein] + [thioredoxin]-disulfide + H2O = L-methionyl-(S)-S-oxide-[protein] + [thioredoxin]-dithiol. It carries out the reaction [thioredoxin]-disulfide + L-methionine + H2O = L-methionine (S)-S-oxide + [thioredoxin]-dithiol. Its function is as follows. Has an important function as a repair enzyme for proteins that have been inactivated by oxidation. Catalyzes the reversible oxidation-reduction of methionine sulfoxide in proteins to methionine. This Clostridium perfringens (strain 13 / Type A) protein is Peptide methionine sulfoxide reductase MsrA.